Here is a 389-residue protein sequence, read N- to C-terminus: S-adenosylmethionine synthase 2 (389 aa).

His-17 serves as a coordination point for ATP. Asp-19 contributes to the Mg(2+) binding site. Glu-45 serves as a coordination point for K(+). Residues Glu-58 and Gln-102 each coordinate L-methionine. A flexible loop region spans residues 102 to 112; the sequence is QSADIAVGVDA. ATP contacts are provided by residues 166-168, 231-232, Asp-240, 246-247, Ala-263, and Lys-267; these read DSK, RF, and RK. Asp-240 contributes to the L-methionine binding site. Position 271 (Lys-271) interacts with L-methionine.

This sequence belongs to the AdoMet synthase family. Homotetramer; dimer of dimers. Mg(2+) is required as a cofactor. The cofactor is K(+).

It localises to the cytoplasm. The enzyme catalyses L-methionine + ATP + H2O = S-adenosyl-L-methionine + phosphate + diphosphate. The protein operates within amino-acid biosynthesis; S-adenosyl-L-methionine biosynthesis; S-adenosyl-L-methionine from L-methionine: step 1/1. In terms of biological role, catalyzes the formation of S-adenosylmethionine (AdoMet) from methionine and ATP. The overall synthetic reaction is composed of two sequential steps, AdoMet formation and the subsequent tripolyphosphate hydrolysis which occurs prior to release of AdoMet from the enzyme. The protein is S-adenosylmethionine synthase 2 of Rhodospirillum rubrum (strain ATCC 11170 / ATH 1.1.1 / DSM 467 / LMG 4362 / NCIMB 8255 / S1).